Here is a 605-residue protein sequence, read N- to C-terminus: Probable potassium transport system protein Kup (605 aa).

12 helical membrane passes run 18–38 (GLVFGDIGTSPIYTLTVIIAL), 46–66 (ILGIISLIVWTLIILVHLEYA), 97–117 (MAFVTFLTYLGVALLMGDGVI), 138–158 (GLSQNTLILIAGTIALFLFVF), 169–189 (AFGPIMVLWFAALALSGAISV), 204–224 (AISFLMHNGLPGFFVLSEVIL), 247–267 (AWYFVFVALVINYLGQGAFII), 287–307 (FYIPFLILTILATIIASQALI), 339–359 (IYIGSVNWLLLCLVILIMLVF), 368–388 (AYGFAVTGTMVITGIMMTMIF), 395–415 (WKVPLALFVTLVDVVFLVSNC), and 418–438 (LPHGGYWSLILASVPLAVILI).

It belongs to the HAK/KUP transporter (TC 2.A.72) family.

The protein localises to the cell inner membrane. It carries out the reaction K(+)(in) + H(+)(in) = K(+)(out) + H(+)(out). In terms of biological role, transport of potassium into the cell. Likely operates as a K(+):H(+) symporter. The protein is Probable potassium transport system protein Kup of Pelobacter propionicus (strain DSM 2379 / NBRC 103807 / OttBd1).